Reading from the N-terminus, the 40-residue chain is Photosystem II reaction center protein J (40 aa).

A helical transmembrane segment spans residues 8 to 28; it reads IPLWLIGTVTGILVIGLLGIF.

Belongs to the PsbJ family. As to quaternary structure, PSII is composed of 1 copy each of membrane proteins PsbA, PsbB, PsbC, PsbD, PsbE, PsbF, PsbH, PsbI, PsbJ, PsbK, PsbL, PsbM, PsbT, PsbX, PsbY, PsbZ, Psb30/Ycf12, at least 3 peripheral proteins of the oxygen-evolving complex and a large number of cofactors. It forms dimeric complexes.

The protein localises to the plastid. It is found in the chloroplast thylakoid membrane. Its function is as follows. One of the components of the core complex of photosystem II (PSII). PSII is a light-driven water:plastoquinone oxidoreductase that uses light energy to abstract electrons from H(2)O, generating O(2) and a proton gradient subsequently used for ATP formation. It consists of a core antenna complex that captures photons, and an electron transfer chain that converts photonic excitation into a charge separation. This is Photosystem II reaction center protein J from Angiopteris evecta (Mule's foot fern).